The primary structure comprises 1236 residues: DNA-directed RNA polymerase subunit beta (1236 aa).

The segment at 1185-1236 (IEGSEDYTEPKQPNDNYLEEEENKDKESDYDEDLNFDDLTKGLQLDDFNDEH) is disordered. Residues 1201–1220 (YLEEEENKDKESDYDEDLNF) are compositionally biased toward acidic residues.

It belongs to the RNA polymerase beta chain family. As to quaternary structure, the RNAP catalytic core consists of 2 alpha, 1 beta, 1 beta' and 1 omega subunit. When a sigma factor is associated with the core the holoenzyme is formed, which can initiate transcription.

The catalysed reaction is RNA(n) + a ribonucleoside 5'-triphosphate = RNA(n+1) + diphosphate. DNA-dependent RNA polymerase catalyzes the transcription of DNA into RNA using the four ribonucleoside triphosphates as substrates. The chain is DNA-directed RNA polymerase subunit beta from Clostridium tetani (strain Massachusetts / E88).